Here is a 229-residue protein sequence, read N- to C-terminus: 2-C-methyl-D-erythritol 4-phosphate cytidylyltransferase (229 aa).

Belongs to the IspD/TarI cytidylyltransferase family. IspD subfamily. In terms of assembly, homodimer.

It carries out the reaction 2-C-methyl-D-erythritol 4-phosphate + CTP + H(+) = 4-CDP-2-C-methyl-D-erythritol + diphosphate. It functions in the pathway isoprenoid biosynthesis; isopentenyl diphosphate biosynthesis via DXP pathway; isopentenyl diphosphate from 1-deoxy-D-xylulose 5-phosphate: step 2/6. In terms of biological role, catalyzes the formation of 4-diphosphocytidyl-2-C-methyl-D-erythritol from CTP and 2-C-methyl-D-erythritol 4-phosphate (MEP). The sequence is that of 2-C-methyl-D-erythritol 4-phosphate cytidylyltransferase from Wigglesworthia glossinidia brevipalpis.